The following is a 255-amino-acid chain: Small ribosomal subunit protein eS1 (255 aa).

Residues 1 to 18 show a composition bias toward basic residues; sequence MAVGKNKRLSKGKKGLKK. The disordered stretch occupies residues 1 to 20; that stretch reads MAVGKNKRLSKGKKGLKKRV. An N-acetylalanine; partial modification is found at alanine 2.

It belongs to the eukaryotic ribosomal protein eS1 family. In terms of assembly, component of the small ribosomal subunit. Mature ribosomes consist of a small (40S) and a large (60S) subunit. The 40S subunit contains about 33 different proteins and 1 molecule of RNA (18S). The 60S subunit contains about 49 different proteins and 3 molecules of RNA (25S, 5.8S and 5S).

The protein resides in the cytoplasm. The chain is Small ribosomal subunit protein eS1 from Coccidioides immitis (strain RS) (Valley fever fungus).